The chain runs to 370 residues: Dihydrolipoyllysine-residue acetyltransferase component of acetoin cleaving system (370 aa).

The Lipoyl-binding domain maps to 4–79 (IHTLTMPKWG…PVGALLAVVV (76 aa)). Residue Lys45 is modified to N6-lipoyllysine. Residues 135–355 (PLVLVHGFGG…EAGHMVQMEA (221 aa)) enclose the AB hydrolase-1 domain.

Requires (R)-lipoate as cofactor.

The enzyme catalyses N(6)-[(R)-dihydrolipoyl]-L-lysyl-[protein] + acetyl-CoA = N(6)-[(R)-S(8)-acetyldihydrolipoyl]-L-lysyl-[protein] + CoA. It participates in ketone degradation; acetoin degradation. The sequence is that of Dihydrolipoyllysine-residue acetyltransferase component of acetoin cleaving system (acoC) from Pseudomonas putida (Arthrobacter siderocapsulatus).